A 971-amino-acid chain; its full sequence is Kinesin-like protein KIN-14C (971 aa).

Positions 14–119 (ANRRAEVIDW…CLLALKDNVA (106 aa)) constitute a Calponin-homology (CH) domain. A coiled-coil region spans residues 272 to 357 (IKALETLVNG…QMETKARQME (86 aa)). One can recognise a Kinesin motor domain in the interval 472 to 799 (NIRVYCRVRP…LKFAERVSGV (328 aa)). 556–563 (GQTGSGKT) is an ATP binding site. The stretch at 809 to 844 (EGKDIKELLEQVASLKDTIARKDMEIEQLQLLKSKS) forms a coiled coil. Positions 839–881 (LLKSKSPNSMTDRNGSNLLRQSTSSTGLSSLPVASQQNQQLSG) are enriched in polar residues. Positions 839–971 (LLKSKSPNSM…GSLAKPSKRR (133 aa)) are disordered.

Belongs to the TRAFAC class myosin-kinesin ATPase superfamily. Kinesin family. KIN-14 subfamily.

The polypeptide is Kinesin-like protein KIN-14C (Oryza sativa subsp. japonica (Rice)).